Consider the following 866-residue polypeptide: DNA mismatch repair protein MutS (866 aa).

618 to 625 (GPNMSGKS) provides a ligand contact to ATP.

The protein belongs to the DNA mismatch repair MutS family.

In terms of biological role, this protein is involved in the repair of mismatches in DNA. It is possible that it carries out the mismatch recognition step. This protein has a weak ATPase activity. This chain is DNA mismatch repair protein MutS, found in Flavobacterium psychrophilum (strain ATCC 49511 / DSM 21280 / CIP 103535 / JIP02/86).